Here is a 524-residue protein sequence, read N- to C-terminus: Glutamyl-tRNA(Gln) amidotransferase subunit A, mitochondrial (524 aa).

Catalysis depends on charge relay system residues lysine 76 and serine 171. Serine 195 serves as the catalytic Acyl-ester intermediate.

Belongs to the amidase family. GatA subfamily. Subunit of the heterotrimeric GatCAB amidotransferase (AdT) complex, composed of A (qrsl1), B (gatb) and C (gatc) subunits.

The protein localises to the mitochondrion. The catalysed reaction is L-glutamyl-tRNA(Gln) + L-glutamine + ATP + H2O = L-glutaminyl-tRNA(Gln) + L-glutamate + ADP + phosphate + H(+). Allows the formation of correctly charged Gln-tRNA(Gln) through the transamidation of misacylated Glu-tRNA(Gln) in the mitochondria. The reaction takes place in the presence of glutamine and ATP through an activated gamma-phospho-Glu-tRNA(Gln). The protein is Glutamyl-tRNA(Gln) amidotransferase subunit A, mitochondrial (qrsl1) of Xenopus tropicalis (Western clawed frog).